The sequence spans 354 residues: Uroporphyrinogen decarboxylase (354 aa).

Residues 27-31 (RQAGR), D77, Y153, T208, and H326 contribute to the substrate site.

The protein belongs to the uroporphyrinogen decarboxylase family. In terms of assembly, homodimer.

It is found in the cytoplasm. The catalysed reaction is uroporphyrinogen III + 4 H(+) = coproporphyrinogen III + 4 CO2. It functions in the pathway porphyrin-containing compound metabolism; protoporphyrin-IX biosynthesis; coproporphyrinogen-III from 5-aminolevulinate: step 4/4. Catalyzes the decarboxylation of four acetate groups of uroporphyrinogen-III to yield coproporphyrinogen-III. The protein is Uroporphyrinogen decarboxylase of Neisseria gonorrhoeae (strain ATCC 700825 / FA 1090).